Here is a 457-residue protein sequence, read N- to C-terminus: Adenylosuccinate synthetase isozyme 2 B (457 aa).

GTP contacts are provided by residues 40–46 and 68–70; these read GDEGKGK and GHT. Asp-41 functions as the Proton acceptor in the catalytic mechanism. Mg(2+) is bound by residues Asp-41 and Gly-68. Position 41 (Asp-41) interacts with substrate. IMP-binding positions include 41-44, 66-69, Thr-163, Arg-177, Asn-256, Thr-271, and Arg-335; these read DEGK and NAGH. His-69 (proton donor) is an active-site residue. 331–337 is a substrate binding site; sequence VTTGRKR. GTP is bound by residues Arg-337, 363-365, and 445-448; these read KLD and GVGK.

This sequence belongs to the adenylosuccinate synthetase family. As to quaternary structure, homodimer. Mg(2+) is required as a cofactor.

It is found in the cytoplasm. Its subcellular location is the mitochondrion. The catalysed reaction is IMP + L-aspartate + GTP = N(6)-(1,2-dicarboxyethyl)-AMP + GDP + phosphate + 2 H(+). Its pathway is purine metabolism; AMP biosynthesis via de novo pathway; AMP from IMP: step 1/2. Inhibited competitively by AMP and IMP and non-competitively by fructose 1,6-bisphosphate. Functionally, plays an important role in the de novo pathway and in the salvage pathway of purine nucleotide biosynthesis. Catalyzes the first committed step in the biosynthesis of AMP from IMP. The polypeptide is Adenylosuccinate synthetase isozyme 2 B (adss2-b) (Xenopus tropicalis (Western clawed frog)).